Here is a 98-residue protein sequence, read N- to C-terminus: Large ribosomal subunit protein bL21 (98 aa).

This sequence belongs to the bacterial ribosomal protein bL21 family. In terms of assembly, part of the 50S ribosomal subunit. Contacts protein L20.

Functionally, this protein binds to 23S rRNA in the presence of protein L20. The protein is Large ribosomal subunit protein bL21 of Chloroherpeton thalassium (strain ATCC 35110 / GB-78).